The following is a 277-amino-acid chain: uncharacterized protein (277 aa).

Belongs to the BtpA family.

Its subcellular location is the mitochondrion. This is an uncharacterized protein from Caenorhabditis elegans.